Here is a 569-residue protein sequence, read N- to C-terminus: Cytochrome P450 monooxygenase abl1 (569 aa).

C464 provides a ligand contact to heme.

The protein belongs to the cytochrome P450 family. Heme serves as cofactor.

Its pathway is hormone biosynthesis. In terms of biological role, cytochrome P450 monooxygenase; part of the gene cluster that mediates the biosynthesis of abscisic acid (ABA), a phytohormone that acts antagonistically toward salicylic acid (SA), jasmonic acid (JA) and ethylene (ETH) signaling, to impede plant defense responses. The first step of the pathway catalyzes the reaction from farnesyl diphosphate to alpha-ionylideneethane performed by the alpha-ionylideneethane synthase abl3 via a three-step reaction mechanism involving 2 neutral intermediates, beta-farnesene and allofarnesene. The cytochrome P450 monooxygenase abl1 might then be involved in the conversion of alpha-ionylideneethane to alpha-ionylideneacetic acid. Alpha-ionylideneacetic acid is further converted to abscisic acid in 2 steps involving the cytochrome P450 monooxygenase abl2 and the short-chain dehydrogenase/reductase abl4, via the intermediates 1'-deoxy-ABA or 1',4'-trans-diol-ABA, depending on the order of action of these 2 enzymes. Abl2 is responsible for the hydroxylation of carbon atom C-1' and abl4 might be involved in the oxidation of the C-4' carbon atom. This Leptosphaeria maculans (strain JN3 / isolate v23.1.3 / race Av1-4-5-6-7-8) (Blackleg fungus) protein is Cytochrome P450 monooxygenase abl1.